Reading from the N-terminus, the 218-residue chain is Interleukin-37 (218 aa).

The tract at residues 1-40 (MSFVGENSGVKMGSEDWEKDEPQCCLEDPAGSPLEPGPSL) is disordered. The propeptide at 1–45 (MSFVGENSGVKMGSEDWEKDEPQCCLEDPAGSPLEPGPSLPTMNF) is removed in mature form. Positions 13 to 22 (GSEDWEKDEP) are enriched in basic and acidic residues.

It belongs to the IL-1 family. Interacts with SMAD3. Binds IL18R1, but not to IL1R1, with lower affinity than IL18, and does not seem to act as a receptor antagonist for IL18. Interacts with cargo receptor TMED10; the interaction mediates the translocation from the cytoplasm into the ERGIC (endoplasmic reticulum-Golgi intermediate compartment) and thereby secretion. In terms of processing, proteolytically converted to the mature form by CASP1. In general, low constitutive expression, if any, in healthy tissues; high expression in inflammatory counterparts, including in synovial tissues from individuals with active rheumatoid arthritis. Isoform A, isoform B and isoform C are expressed in testis, colon, placenta, lung and lymph node. Isoform D and isoform E were found only in testis and bone marrow. Whereas only isoform A is found in brain, only isoform B in kidney and only isoform C in heart.

It is found in the cytoplasm. Its subcellular location is the cytosol. The protein localises to the nucleus. It localises to the secreted. Its function is as follows. Immune regulatory cytokine that acts as a suppressor of innate inflammatory and immune responses involved in curbing excessive inflammation. Signaling can occur via two mechanisms, intracellularly through nuclear translocation with SMAD3 and extracellularly after secretion and binding to its receptor composed of IL18R1 and IL18RAP. Suppresses, or reduces, pro-inflammatory cytokine production, including IL1A and IL6, as well as CCL12, CSF1, CSF2, CXCL13, IL1B, IL23A and IL1RN, but spares anti-inflammatory cytokines. Inhibits dendritic cell activation. This Homo sapiens (Human) protein is Interleukin-37.